Reading from the N-terminus, the 514-residue chain is Phospholipase C D (514 aa).

Residues 1 to 37 (MSQSHIGGVSRREFLAKVAAGGAGALMSFAGPVIEKA) constitute a signal peptide (tat-type signal). Positions 492–514 (VPDPQIMPTQETTPTRGIPSGPC) are disordered.

This sequence belongs to the bacterial phospholipase C family. Predicted to be exported by the Tat system. The position of the signal peptide cleavage has not been experimentally proven.

The protein localises to the secreted. It is found in the cell wall. The catalysed reaction is a 1,2-diacyl-sn-glycero-3-phosphocholine + H2O = phosphocholine + a 1,2-diacyl-sn-glycerol + H(+). Functionally, involved in virulence. Induces cytotoxic effects on mouse macrophage cell lines, via direct or indirect enzymatic hydrolysis of cell membrane phospholipids. Hydrolyzes phosphatidylcholine. This is Phospholipase C D from Mycobacterium tuberculosis (strain CDC 1551 / Oshkosh).